We begin with the raw amino-acid sequence, 243 residues long: Triosephosphate isomerase (243 aa).

9–11 (NWK) serves as a coordination point for substrate. Catalysis depends on His96, which acts as the Electrophile. The active-site Proton acceptor is the Glu165. Residues Gly171, Ser204, and 225-226 (GG) contribute to the substrate site.

The protein belongs to the triosephosphate isomerase family. In terms of assembly, homodimer.

Its subcellular location is the cytoplasm. The enzyme catalyses D-glyceraldehyde 3-phosphate = dihydroxyacetone phosphate. It functions in the pathway carbohydrate biosynthesis; gluconeogenesis. It participates in carbohydrate degradation; glycolysis; D-glyceraldehyde 3-phosphate from glycerone phosphate: step 1/1. Its function is as follows. Involved in the gluconeogenesis. Catalyzes stereospecifically the conversion of dihydroxyacetone phosphate (DHAP) to D-glyceraldehyde-3-phosphate (G3P). The sequence is that of Triosephosphate isomerase from Parasynechococcus marenigrum (strain WH8102).